Here is a 170-residue protein sequence, read N- to C-terminus: ATP synthase subunit b (170 aa).

Residues 15-37 (LNLFETNVLNWAVVVFGLYKFLP) form a helical membrane-spanning segment.

This sequence belongs to the ATPase B chain family. In terms of assembly, F-type ATPases have 2 components, F(1) - the catalytic core - and F(0) - the membrane proton channel. F(1) has five subunits: alpha(3), beta(3), gamma(1), delta(1), epsilon(1). F(0) has four main subunits: a(1), b(1), b'(1) and c(10-14). The alpha and beta chains form an alternating ring which encloses part of the gamma chain. F(1) is attached to F(0) by a central stalk formed by the gamma and epsilon chains, while a peripheral stalk is formed by the delta, b and b' chains.

It localises to the cellular thylakoid membrane. Its function is as follows. F(1)F(0) ATP synthase produces ATP from ADP in the presence of a proton or sodium gradient. F-type ATPases consist of two structural domains, F(1) containing the extramembraneous catalytic core and F(0) containing the membrane proton channel, linked together by a central stalk and a peripheral stalk. During catalysis, ATP synthesis in the catalytic domain of F(1) is coupled via a rotary mechanism of the central stalk subunits to proton translocation. Functionally, component of the F(0) channel, it forms part of the peripheral stalk, linking F(1) to F(0). The sequence is that of ATP synthase subunit b from Prochlorococcus marinus (strain MIT 9515).